We begin with the raw amino-acid sequence, 258 residues long: UPF0246 protein CKO_03380 (258 aa).

It belongs to the UPF0246 family.

This chain is UPF0246 protein CKO_03380, found in Citrobacter koseri (strain ATCC BAA-895 / CDC 4225-83 / SGSC4696).